The chain runs to 480 residues: Coronin-2B (480 aa).

5 WD repeats span residues 85–125, 135–177, 179–217, 220–263, and 265–308; these read GHQG…LKRN, GHSR…KMID, HRDV…VLQE, CKTH…MPVT, and EEID…PYLT. Positions 436–475 form a coiled coil; that stretch reads NELLRMFFRQQEEIRRLKEQLSQRDLLVRQLELELKNLRN.

It belongs to the WD repeat coronin family.

It is found in the cytoplasm. The protein resides in the cytoskeleton. May play a role in the reorganization of neuronal actin structure. This Xenopus tropicalis (Western clawed frog) protein is Coronin-2B (coro2b).